The primary structure comprises 577 residues: Autophagy-related protein 20 (577 aa).

Residues Gly-57–Gln-81 form a disordered region. The 145-residue stretch at Gly-95–Trp-239 folds into the PX domain. A 1,2-diacyl-sn-glycero-3-phospho-(1D-myo-inositol-3-phosphate)-binding residues include Arg-131, Ser-133, Lys-157, and Arg-205.

It belongs to the sorting nexin family.

The protein resides in the endosome membrane. Its subcellular location is the preautophagosomal structure membrane. Functionally, required for cytoplasm to vacuole transport (Cvt), pexophagy and mitophagy. Also involved in endoplasmic reticulum-specific autophagic process and is essential for the survival of cells subjected to severe ER stress. Functions in protein retrieval from the endocytic pathway. The sequence is that of Autophagy-related protein 20 (ATG20) from Eremothecium gossypii (strain ATCC 10895 / CBS 109.51 / FGSC 9923 / NRRL Y-1056) (Yeast).